Reading from the N-terminus, the 185-residue chain is Ribosome-recycling factor (185 aa).

Positions 136–159 are disordered; that stretch reads NEQLKSQQKDGKMSEDELKRSQDE.

The protein belongs to the RRF family.

The protein localises to the cytoplasm. Functionally, responsible for the release of ribosomes from messenger RNA at the termination of protein biosynthesis. May increase the efficiency of translation by recycling ribosomes from one round of translation to another. The protein is Ribosome-recycling factor of Pelotomaculum thermopropionicum (strain DSM 13744 / JCM 10971 / SI).